A 336-amino-acid polypeptide reads, in one-letter code: Holliday junction branch migration complex subunit RuvB (336 aa).

A large ATPase domain (RuvB-L) region spans residues 4–184; sequence SDRLISSQSI…FGIVQRLEYY (181 aa). ATP contacts are provided by residues Ile-23, Arg-24, Gly-65, Lys-68, Thr-69, Thr-70, 131 to 133, Arg-174, Tyr-184, and Arg-221; that span reads EDY. Thr-69 contributes to the Mg(2+) binding site. Residues 185–255 are small ATPAse domain (RuvB-S); it reads SVDSLTQIVA…MAQQALEMLE (71 aa). The tract at residues 258-336 is head domain (RuvB-H); the sequence is QHGFDLMDRK…HFGFSAIEQE (79 aa). Residues Arg-313 and Arg-318 each coordinate DNA.

This sequence belongs to the RuvB family. As to quaternary structure, homohexamer. Forms an RuvA(8)-RuvB(12)-Holliday junction (HJ) complex. HJ DNA is sandwiched between 2 RuvA tetramers; dsDNA enters through RuvA and exits via RuvB. An RuvB hexamer assembles on each DNA strand where it exits the tetramer. Each RuvB hexamer is contacted by two RuvA subunits (via domain III) on 2 adjacent RuvB subunits; this complex drives branch migration. In the full resolvosome a probable DNA-RuvA(4)-RuvB(12)-RuvC(2) complex forms which resolves the HJ.

It is found in the cytoplasm. The catalysed reaction is ATP + H2O = ADP + phosphate + H(+). Functionally, the RuvA-RuvB-RuvC complex processes Holliday junction (HJ) DNA during genetic recombination and DNA repair, while the RuvA-RuvB complex plays an important role in the rescue of blocked DNA replication forks via replication fork reversal (RFR). RuvA specifically binds to HJ cruciform DNA, conferring on it an open structure. The RuvB hexamer acts as an ATP-dependent pump, pulling dsDNA into and through the RuvAB complex. RuvB forms 2 homohexamers on either side of HJ DNA bound by 1 or 2 RuvA tetramers; 4 subunits per hexamer contact DNA at a time. Coordinated motions by a converter formed by DNA-disengaged RuvB subunits stimulates ATP hydrolysis and nucleotide exchange. Immobilization of the converter enables RuvB to convert the ATP-contained energy into a lever motion, pulling 2 nucleotides of DNA out of the RuvA tetramer per ATP hydrolyzed, thus driving DNA branch migration. The RuvB motors rotate together with the DNA substrate, which together with the progressing nucleotide cycle form the mechanistic basis for DNA recombination by continuous HJ branch migration. Branch migration allows RuvC to scan DNA until it finds its consensus sequence, where it cleaves and resolves cruciform DNA. This Legionella pneumophila (strain Lens) protein is Holliday junction branch migration complex subunit RuvB.